The chain runs to 574 residues: Phenylalanine--tRNA ligase beta subunit (574 aa).

The region spanning 278-353 is the B5 domain; that stretch reads LTPKEFEVEL…IAYGYNEIEP (76 aa). D331, D337, E340, and D341 together coordinate Mg(2+).

The protein belongs to the phenylalanyl-tRNA synthetase beta subunit family. Type 2 subfamily. As to quaternary structure, tetramer of two alpha and two beta subunits. Requires Mg(2+) as cofactor.

It is found in the cytoplasm. It catalyses the reaction tRNA(Phe) + L-phenylalanine + ATP = L-phenylalanyl-tRNA(Phe) + AMP + diphosphate + H(+). The sequence is that of Phenylalanine--tRNA ligase beta subunit from Thermococcus kodakarensis (strain ATCC BAA-918 / JCM 12380 / KOD1) (Pyrococcus kodakaraensis (strain KOD1)).